A 436-amino-acid polypeptide reads, in one-letter code: Trigger factor (436 aa).

A PPIase FKBP-type domain is found at 161 to 246 (DDQLNIDFVG…VNSVAEPKLP (86 aa)).

It belongs to the FKBP-type PPIase family. Tig subfamily.

It is found in the cytoplasm. The catalysed reaction is [protein]-peptidylproline (omega=180) = [protein]-peptidylproline (omega=0). Involved in protein export. Acts as a chaperone by maintaining the newly synthesized protein in an open conformation. Functions as a peptidyl-prolyl cis-trans isomerase. The chain is Trigger factor from Pseudomonas paraeruginosa (strain DSM 24068 / PA7) (Pseudomonas aeruginosa (strain PA7)).